Here is a 506-residue protein sequence, read N- to C-terminus: Arabinose import ATP-binding protein AraG (506 aa).

ABC transporter domains follow at residues 10–245 and 253–501; these read LEFC…MVGR and YRSR…MLGN. ATP is bound at residue 42-49; it reads GENGAGKS.

This sequence belongs to the ABC transporter superfamily. Arabinose importer (TC 3.A.1.2.2) family. In terms of assembly, the complex is composed of two ATP-binding proteins (AraG), two transmembrane proteins (AraH) and a solute-binding protein (AraF).

It is found in the cell inner membrane. It catalyses the reaction L-arabinose(out) + ATP + H2O = L-arabinose(in) + ADP + phosphate + H(+). Its function is as follows. Part of the ABC transporter complex AraFGH involved in arabinose import. Responsible for energy coupling to the transport system. The chain is Arabinose import ATP-binding protein AraG from Vibrio parahaemolyticus serotype O3:K6 (strain RIMD 2210633).